The chain runs to 997 residues: Translation initiation factor IF-2 (997 aa).

The interval Ser-36–Arg-415 is disordered. 2 stretches are compositionally biased toward basic and acidic residues: residues Glu-45–Gly-65 and Ala-94–Ala-107. Positions Ala-108–Pro-126 are enriched in low complexity. A compositionally biased stretch (basic and acidic residues) spans His-127–Lys-147. Residues Ala-151–Arg-162 show a composition bias toward low complexity. A compositionally biased stretch (basic and acidic residues) spans Pro-163 to Pro-181. Low complexity predominate over residues Val-182–Glu-196. 2 stretches are compositionally biased toward basic and acidic residues: residues Ala-197–Ala-214 and Pro-241–Asp-252. Residues Gly-300–Arg-309 are compositionally biased toward gly residues. Over residues Pro-316–Gly-335 the composition is skewed to pro residues. Residues Gly-378–Arg-388 are compositionally biased toward basic and acidic residues. Basic residues predominate over residues Asn-390–Gly-399. The tr-type G domain occupies Pro-496–Lys-665. The segment at Gly-505–Thr-512 is G1. GTP is bound at residue Gly-505 to Thr-512. The interval Gly-530–His-534 is G2. The G3 stretch occupies residues Asp-551–Gly-554. Residues Asp-551–His-555 and Asn-605–Asp-608 each bind GTP. Positions Asn-605–Asp-608 are G4. Residues Ala-641 to Lys-643 form a G5 region.

The protein belongs to the TRAFAC class translation factor GTPase superfamily. Classic translation factor GTPase family. IF-2 subfamily.

Its subcellular location is the cytoplasm. One of the essential components for the initiation of protein synthesis. Protects formylmethionyl-tRNA from spontaneous hydrolysis and promotes its binding to the 30S ribosomal subunits. Also involved in the hydrolysis of GTP during the formation of the 70S ribosomal complex. The sequence is that of Translation initiation factor IF-2 from Desulfovibrio desulfuricans (strain ATCC 27774 / DSM 6949 / MB).